Reading from the N-terminus, the 351-residue chain is Inositol monophosphatase 3 (351 aa).

The helical transmembrane segment at 11–31 (LGIGVFCLLALGVLYHVYSGF) threads the bilayer. Mg(2+) contacts are provided by Glu121, Asp162, Leu164, Asp165, and Asp288. Substrate is bound at residue Glu121. Substrate contacts are provided by residues 164 to 167 (LDAT) and Asp288.

It belongs to the inositol monophosphatase superfamily. Mg(2+) is required as a cofactor.

The protein resides in the membrane. It carries out the reaction a myo-inositol phosphate + H2O = myo-inositol + phosphate. Its pathway is polyol metabolism; myo-inositol biosynthesis; myo-inositol from D-glucose 6-phosphate: step 2/2. The sequence is that of Inositol monophosphatase 3 (bpnt2) from Xenopus laevis (African clawed frog).